The sequence spans 124 residues: Phycocyanin PC645 alpha-3 subunit (124 aa).

(2R,3E)-phycocyanobilin is bound at residue Arg71. Mesobiliverdin contacts are provided by Cys73, Tyr81, and Lys97.

Belongs to the phycoerythrin family. In terms of assembly, heterotetramer of 2 different alpha chains and 2 identical beta chains which form 2 alpha-beta heterodimers within the heterotetramer. Contains one phycocyanobilin chromophore and one mesobiliverdin chromophore with binding mediated by both the alpha and beta subunits.

The protein localises to the plastid. Its subcellular location is the chloroplast thylakoid membrane. Its function is as follows. Light-harvesting photosynthetic tetrapyrrole chromophore-protein from the phycobiliprotein complex. This Chroomonas sp. (strain CCMP270) protein is Phycocyanin PC645 alpha-3 subunit.